Consider the following 398-residue polypeptide: S-adenosylmethionine synthase (398 aa).

His-26 provides a ligand contact to ATP. Position 28 (Asp-28) interacts with Mg(2+). Residue Glu-54 coordinates K(+). Positions 67 and 110 each coordinate L-methionine. A flexible loop region spans residues 110–120; sequence QSPDIAQGVNE. Residues 177 to 179, 243 to 244, Asp-252, 258 to 259, Ala-275, and Lys-279 contribute to the ATP site; these read DAK, RF, and RK. An L-methionine-binding site is contributed by Asp-252. An L-methionine-binding site is contributed by Lys-283.

It belongs to the AdoMet synthase family. In terms of assembly, homotetramer; dimer of dimers. Mg(2+) is required as a cofactor. It depends on K(+) as a cofactor.

Its subcellular location is the cytoplasm. The enzyme catalyses L-methionine + ATP + H2O = S-adenosyl-L-methionine + phosphate + diphosphate. It functions in the pathway amino-acid biosynthesis; S-adenosyl-L-methionine biosynthesis; S-adenosyl-L-methionine from L-methionine: step 1/1. Catalyzes the formation of S-adenosylmethionine (AdoMet) from methionine and ATP. The overall synthetic reaction is composed of two sequential steps, AdoMet formation and the subsequent tripolyphosphate hydrolysis which occurs prior to release of AdoMet from the enzyme. This is S-adenosylmethionine synthase from Desulfotalea psychrophila (strain LSv54 / DSM 12343).